The sequence spans 372 residues: Putative glutamate--cysteine ligase 2 (372 aa).

It belongs to the glutamate--cysteine ligase type 2 family. YbdK subfamily.

The enzyme catalyses L-cysteine + L-glutamate + ATP = gamma-L-glutamyl-L-cysteine + ADP + phosphate + H(+). ATP-dependent carboxylate-amine ligase which exhibits weak glutamate--cysteine ligase activity. This Cupriavidus metallidurans (strain ATCC 43123 / DSM 2839 / NBRC 102507 / CH34) (Ralstonia metallidurans) protein is Putative glutamate--cysteine ligase 2.